The sequence spans 80 residues: Protein CEBPZOS (80 aa).

A helical membrane pass occupies residues 15–31; it reads GVLAAELVGVAGAYCLF.

It is found in the mitochondrion membrane. The protein is Protein CEBPZOS of Mus musculus (Mouse).